Reading from the N-terminus, the 37-residue chain is U1-ectatotoxin-Eb1a subunit B (37 aa).

The protein belongs to the ectatomin family. Ectatomin-Eq subfamily. Heterodimer of subunits A and B; disulfide-linked. Expressed by the venom gland.

It localises to the secreted. The protein localises to the target cell membrane. The chain is U1-ectatotoxin-Eb1a subunit B from Ectatomma brunneum (Ant).